The sequence spans 333 residues: Type II restriction enzyme XcyI (333 aa).

Belongs to the XcyI type II restriction endonuclease family. Monomer. Mg(2+) serves as cofactor.

The catalysed reaction is Endonucleolytic cleavage of DNA to give specific double-stranded fragments with terminal 5'-phosphates.. Its function is as follows. A P subtype restriction enzyme that recognizes the double-stranded sequence 5'-CCCGGG-3' and cleaves after C-1. This chain is Type II restriction enzyme XcyI (xcyIR), found in Xanthomonas campestris pv. cyanopsidis.